The primary structure comprises 156 residues: ATP synthase subunit b (156 aa).

Residues 7 to 29 form a helical membrane-spanning segment; sequence LFAQMVVFLVLAWFTMKFVWPPL.

The protein belongs to the ATPase B chain family. In terms of assembly, F-type ATPases have 2 components, F(1) - the catalytic core - and F(0) - the membrane proton channel. F(1) has five subunits: alpha(3), beta(3), gamma(1), delta(1), epsilon(1). F(0) has three main subunits: a(1), b(2) and c(10-14). The alpha and beta chains form an alternating ring which encloses part of the gamma chain. F(1) is attached to F(0) by a central stalk formed by the gamma and epsilon chains, while a peripheral stalk is formed by the delta and b chains.

It localises to the cell inner membrane. In terms of biological role, f(1)F(0) ATP synthase produces ATP from ADP in the presence of a proton or sodium gradient. F-type ATPases consist of two structural domains, F(1) containing the extramembraneous catalytic core and F(0) containing the membrane proton channel, linked together by a central stalk and a peripheral stalk. During catalysis, ATP synthesis in the catalytic domain of F(1) is coupled via a rotary mechanism of the central stalk subunits to proton translocation. Component of the F(0) channel, it forms part of the peripheral stalk, linking F(1) to F(0). This chain is ATP synthase subunit b, found in Burkholderia multivorans (strain ATCC 17616 / 249).